The sequence spans 427 residues: Enolase (427 aa).

Gln-163 is a (2R)-2-phosphoglycerate binding site. Glu-205 acts as the Proton donor in catalysis. The Mg(2+) site is built by Asp-242, Glu-285, and Asp-312. (2R)-2-phosphoglycerate contacts are provided by Lys-337, Arg-366, Ser-367, and Lys-388. The active-site Proton acceptor is the Lys-337.

It belongs to the enolase family. Requires Mg(2+) as cofactor.

It is found in the cytoplasm. The protein resides in the secreted. Its subcellular location is the cell surface. The catalysed reaction is (2R)-2-phosphoglycerate = phosphoenolpyruvate + H2O. It functions in the pathway carbohydrate degradation; glycolysis; pyruvate from D-glyceraldehyde 3-phosphate: step 4/5. Functionally, catalyzes the reversible conversion of 2-phosphoglycerate (2-PG) into phosphoenolpyruvate (PEP). It is essential for the degradation of carbohydrates via glycolysis. The sequence is that of Enolase from Ralstonia pickettii (strain 12J).